A 278-amino-acid chain; its full sequence is Undecaprenyl-diphosphatase 3 (278 aa).

The next 6 membrane-spanning stretches (helical) occupy residues 42-62, 88-108, 119-139, 187-207, 224-244, and 254-274; these read DITA…LLYF, YRFG…GVAF, LWFV…ADHV, VAVT…AAAL, ATII…AWLL, and VFIG…ATGI.

The protein belongs to the UppP family.

The protein resides in the cell membrane. The enzyme catalyses di-trans,octa-cis-undecaprenyl diphosphate + H2O = di-trans,octa-cis-undecaprenyl phosphate + phosphate + H(+). Catalyzes the dephosphorylation of undecaprenyl diphosphate (UPP). Confers resistance to bacitracin. The polypeptide is Undecaprenyl-diphosphatase 3 (Frankia casuarinae (strain DSM 45818 / CECT 9043 / HFP020203 / CcI3)).